Here is a 560-residue protein sequence, read N- to C-terminus: Calcium-binding and coiled-coil domain-containing protein 1-A (560 aa).

2 coiled-coil regions span residues 156–192 (KATF…EKRI) and 367–480 (WWQE…DKML). The interval 480–517 (LMEDKTDSSPPTLSVDLSDSDDESPGDEGVSQQLGPCS) is disordered. The span at 487 to 496 (SSPPTLSVDL) shows a compositional bias: low complexity.

The protein belongs to the CALCOCO family.

It localises to the cytoplasm. Its subcellular location is the nucleus. Its function is as follows. May function as a coactivator for aryl hydrocarbon and nuclear receptors. This Xenopus laevis (African clawed frog) protein is Calcium-binding and coiled-coil domain-containing protein 1-A (calcoco1-a).